Consider the following 521-residue polypeptide: Vang-like protein 2 (521 aa).

Positions 1–81 are disordered; sequence MDNDSQYSGY…TTVVTGTSEH (81 aa). Residues 1–108 lie on the Cytoplasmic side of the membrane; it reads MDNDSQYSGY…AKLDCSRHLG (108 aa). Residues 15–33 are compositionally biased toward basic residues; it reads GHSRSSRKHRDRRERHRSK. A compositionally biased stretch (basic and acidic residues) spans 57–67; the sequence is ESTRGEDRDDN. Low complexity predominate over residues 69-81; sequence GETTTVVTGTSEH. Residues 109-129 form a helical membrane-spanning segment; sequence VVIGGALALLSFLTPIAFMLL. Residues 130-147 are Extracellular-facing; that stretch reads PQILWREDLEQCGTACEG. Residues 148-168 form a helical membrane-spanning segment; it reads LFISVAFKLLILLLGSWALFF. The Cytoplasmic segment spans residues 169 to 178; that stretch reads RRPKAFFPRV. Residues 179–199 form a helical membrane-spanning segment; the sequence is FVFRALLMVLVFLLVVSYWLF. At 200-218 the chain is on the extracellular side; sequence YGVRILESRDKNYQGIVQY. The chain crosses the membrane as a helical span at residues 219–239; it reads AVSLVDALLFVHYLAVVLLEL. Topologically, residues 240-521 are cytoplasmic; sequence RQLQPQFTVK…VMRLQSETSV (282 aa). Positions 518 to 521 match the PDZ-binding motif; the sequence is ETSV.

Belongs to the Vang family. Interacts with dvl/dsh. Interacts with prickle3.

It is found in the cell membrane. Its function is as follows. Has a role in non-canonical Wnt/planar cell polarity (PCP) signaling; can recruit dvl/dsh and prickle from the cytoplasm to the plasma membrane. Acts in a PCP complex to regulate the polarized assembly of fibronectrin on the surface of the mesoderm during gastrulation. Regulates convergent extension in both dorsal mesoderm and neural tissue without affecting cell fate. Regulates neural fold closure during neurulation. May be required for cell surface localization of fzd3 and fzd6 in the inner ear. This Xenopus tropicalis (Western clawed frog) protein is Vang-like protein 2.